Consider the following 204-residue polypeptide: Small ribosomal subunit protein uS7 (204 aa).

Methionine 1 is modified (N-acetylmethionine). Threonine 2 carries the N-acetylthreonine; in 40S ribosomal protein S5, N-terminally processed modification. Threonine 14 carries the post-translational modification Phosphothreonine. Lysine 47 bears the N6-acetyllysine; alternate mark. Lysine 47 is covalently cross-linked (Glycyl lysine isopeptide (Lys-Gly) (interchain with G-Cter in SUMO2); alternate). Serine 142 carries the phosphoserine modification.

The protein belongs to the universal ribosomal protein uS7 family. In terms of assembly, component of the small ribosomal subunit. Part of the small subunit (SSU) processome, composed of more than 70 proteins and the RNA chaperone small nucleolar RNA (snoRNA) U3.

Its subcellular location is the cytoplasm. The protein resides in the nucleus. The protein localises to the nucleolus. Functionally, component of the small ribosomal subunit. The ribosome is a large ribonucleoprotein complex responsible for the synthesis of proteins in the cell. Part of the small subunit (SSU) processome, first precursor of the small eukaryotic ribosomal subunit. During the assembly of the SSU processome in the nucleolus, many ribosome biogenesis factors, an RNA chaperone and ribosomal proteins associate with the nascent pre-rRNA and work in concert to generate RNA folding, modifications, rearrangements and cleavage as well as targeted degradation of pre-ribosomal RNA by the RNA exosome. This is Small ribosomal subunit protein uS7 (Rps5) from Mus musculus (Mouse).